We begin with the raw amino-acid sequence, 42 residues long: Kappa-actitoxin-Ael2a (42 aa).

3 cysteine pairs are disulfide-bonded: Cys4–Cys37, Cys6–Cys30, and Cys20–Cys38.

The protein belongs to the sea anemone type 3 (BDS) potassium channel toxin family.

It localises to the secreted. It is found in the nematocyst. Functionally, peptide with both antimicrobial and neurotoxin activities. This toxin acts both on ERG potassium channels and sodium channels. It potently and reversibly inhibits human Kv11.1/KCNH2/ERG1 (IC(50)=34 nM), rat Kv11.1/KCNH2/ERG1 and Kv11.3/KCNH7/ERG3 voltage-gated potassium channels in a similar potency. It acts as a gating-modifier toxin that shifts the voltage-dependence of ERG activation in the positive direction and suppresses its current amplitudes elicited by strong depolarizing pulses. On sodium channels, it blocks Nav1.2/SCN2A (EC(50)=31 nM), Nav1.3/SCN3A, Nav1.4/SCN4A, Nav1.5/SCN5A, Nav1.6/SCN8A, Nav1.8/SCN10A (EC(50)=92 nM). It may act by binding at site 1 or close by, only when the pore is in an open configuration. Shows antibacterial activity against the Gram-negative bacterium S.typhimurium, but not on the bacteria B.subtilis, S.aureus, and P.aeruginosa. In vivo, this toxin does not induce neurotoxic symptoms when injected into mice. In Anthopleura elegantissima (Green aggregating anemone), this protein is Kappa-actitoxin-Ael2a.